Reading from the N-terminus, the 384-residue chain is Chaperone protein DnaJ (384 aa).

A J domain is found at Asp-5–Gly-70. The CR-type zinc-finger motif lies at Gly-138–Thr-216. Positions 151, 154, 168, 171, 190, 193, 204, and 207 each coordinate Zn(2+). 4 CXXCXGXG motif repeats span residues Cys-151–Gly-158, Cys-168–Gly-175, Cys-190–Gly-197, and Cys-204–Gly-211.

Belongs to the DnaJ family. In terms of assembly, homodimer. It depends on Zn(2+) as a cofactor.

It is found in the cytoplasm. Functionally, participates actively in the response to hyperosmotic and heat shock by preventing the aggregation of stress-denatured proteins and by disaggregating proteins, also in an autonomous, DnaK-independent fashion. Unfolded proteins bind initially to DnaJ; upon interaction with the DnaJ-bound protein, DnaK hydrolyzes its bound ATP, resulting in the formation of a stable complex. GrpE releases ADP from DnaK; ATP binding to DnaK triggers the release of the substrate protein, thus completing the reaction cycle. Several rounds of ATP-dependent interactions between DnaJ, DnaK and GrpE are required for fully efficient folding. Also involved, together with DnaK and GrpE, in the DNA replication of plasmids through activation of initiation proteins. This is Chaperone protein DnaJ from Idiomarina loihiensis (strain ATCC BAA-735 / DSM 15497 / L2-TR).